The following is a 184-amino-acid chain: NADH-quinone oxidoreductase subunit B (184 aa).

The [4Fe-4S] cluster site is built by Cys63, Cys64, Cys128, and Cys158.

This sequence belongs to the complex I 20 kDa subunit family. In terms of assembly, NDH-1 is composed of 14 different subunits. Subunits NuoB, C, D, E, F, and G constitute the peripheral sector of the complex. It depends on [4Fe-4S] cluster as a cofactor.

Its subcellular location is the cell inner membrane. It catalyses the reaction a quinone + NADH + 5 H(+)(in) = a quinol + NAD(+) + 4 H(+)(out). In terms of biological role, NDH-1 shuttles electrons from NADH, via FMN and iron-sulfur (Fe-S) centers, to quinones in the respiratory chain. Couples the redox reaction to proton translocation (for every two electrons transferred, four hydrogen ions are translocated across the cytoplasmic membrane), and thus conserves the redox energy in a proton gradient. The chain is NADH-quinone oxidoreductase subunit B from Xylella fastidiosa (strain 9a5c).